A 695-amino-acid chain; its full sequence is Probable glucan endo-1,3-beta-glucosidase btgC (695 aa).

Disordered regions lie at residues 1 to 53, 117 to 140, 175 to 258, and 286 to 314; these read MSGP…THHG, RRGT…GSDN, GPAG…RSQA, and ETSY…STGS. Residues 1–317 lie on the Cytoplasmic side of the membrane; sequence MSGPHRTFSF…PKPSTGSRKR (317 aa). Positions 36–45 are enriched in polar residues; that stretch reads PISNMSSSPG. Residues 188-198 show a composition bias toward polar residues; that stretch reads HLGTSNSSQRN. Acidic residues predominate over residues 231–241; it reads NPEEIADDGDD. Residues 318-338 form a helical; Signal-anchor for type II membrane protein membrane-spanning segment; it reads GWIIGAILAVIIIGAIVGGAV. At 339–695 the chain is on the extracellular side; sequence GGTIGHKDSG…IPDCGGKTAA (357 aa). The tract at residues 346 to 372 is disordered; it reads DSGDSASGSSASTQSASGDTDTNGDLD. Low complexity predominate over residues 349–366; the sequence is DSASGSSASTQSASGDTD. N-linked (GlcNAc...) asparagine glycans are attached at residues N415, N438, and N466. Catalysis depends on E498, which acts as the Proton donor. E597 acts as the Nucleophile in catalysis. Residue N642 is glycosylated (N-linked (GlcNAc...) asparagine).

The protein belongs to the glycosyl hydrolase 17 family.

It is found in the cell membrane. The enzyme catalyses Hydrolysis of (1-&gt;3)-beta-D-glucosidic linkages in (1-&gt;3)-beta-D-glucans.. Functionally, glucanases play a role in cell expansion during growth, in cell-cell fusion during mating, and in spore release during sporulation. This enzyme may be involved in beta-glucan degradation. Active on laminarin and lichenan. This chain is Probable glucan endo-1,3-beta-glucosidase btgC (btgC), found in Aspergillus clavatus (strain ATCC 1007 / CBS 513.65 / DSM 816 / NCTC 3887 / NRRL 1 / QM 1276 / 107).